The sequence spans 107 residues: Large ribosomal subunit protein P2 (107 aa).

The span at 63 to 83 shows a compositional bias: low complexity; that stretch reads SSVPSGGSAPAAAAPSGGAAP. Positions 63–107 are disordered; sequence SSVPSGGSAPAAAAPSGGAAPKAEEKKKEEPKEESDDDMGFGLFD. Basic and acidic residues predominate over residues 84–93; sequence KAEEKKKEEP.

It belongs to the eukaryotic ribosomal protein P1/P2 family. P1 and P2 exist as dimers at the large ribosomal subunit. In terms of processing, phosphorylated.

Its function is as follows. Plays an important role in the elongation step of protein synthesis. This chain is Large ribosomal subunit protein P2, found in Caenorhabditis elegans.